The following is a 283-amino-acid chain: Release factor glutamine methyltransferase (283 aa).

S-adenosyl-L-methionine contacts are provided by residues 120–124, Asp-143, Phe-172, and Asn-187; that span reads GTGSG. 187 to 190 contacts substrate; the sequence is NPPY.

The protein belongs to the protein N5-glutamine methyltransferase family. PrmC subfamily.

The catalysed reaction is L-glutaminyl-[peptide chain release factor] + S-adenosyl-L-methionine = N(5)-methyl-L-glutaminyl-[peptide chain release factor] + S-adenosyl-L-homocysteine + H(+). In terms of biological role, methylates the class 1 translation termination release factors RF1/PrfA and RF2/PrfB on the glutamine residue of the universally conserved GGQ motif. The protein is Release factor glutamine methyltransferase of Moorella thermoacetica (strain ATCC 39073 / JCM 9320).